We begin with the raw amino-acid sequence, 501 residues long: U6 snRNA (guanine-N(2))-methyltransferase THUMPD2 (501 aa).

In terms of domain architecture, THUMP spans T149–V264. A disordered region spans residues L414 to P469. A compositionally biased stretch (basic and acidic residues) spans H430–P442.

The protein belongs to the methyltransferase superfamily. As to quaternary structure, part of the heterodimeric THUMPD2-TRM112 methyltransferase complex; this complex forms an active tRNA methyltransferase, where TRMT112 acts as an activator of the catalytic subunit THUMPD2.

The protein resides in the nucleus. It catalyses the reaction guanosine in U6 snRNA + S-adenosyl-L-methionine = N(2)-methylguanosine in U6 snRNA + S-adenosyl-L-homocysteine + H(+). Functionally, catalytic subunit of the THUMPD2-TRM112 methyltransferase complex, that specifically mediates the S-adenosyl-L-methionine-dependent N(2)-methylation of guanosine nucleotides, most probably at position 72 (m2G72), in the U6snRNA of the major spliceosome. This modification in the U6 snRNA affects the constitutive splicing efficiency of introns that have suboptimal splice sites and can impact final mRNA levels. The chain is U6 snRNA (guanine-N(2))-methyltransferase THUMPD2 from Bos taurus (Bovine).